Consider the following 672-residue polypeptide: Fumonisin cluster-specific transcription factor FUM21 (672 aa).

Positions 30–56 (CESCKRRKVRCNGTNPCNQCQKSSIEC) form a DNA-binding region, zn(2)-C6 fungal-type. Disordered stretches follow at residues 65 to 111 (ANDG…RFDG) and 190 to 212 (KSSG…GFNT). A compositionally biased stretch (polar residues) spans 77-93 (SPVQHTRGSLTPPQTSP).

The protein resides in the nucleus. Functionally, transcription factor that regulates the expression of the gene cluster that mediates the biosynthesis of fumonisins B1 (FB1), B2 (FB2), B3 (FB3), and B4 (FB4), which are carcinogenic mycotoxins. This Gibberella moniliformis (strain M3125 / FGSC 7600) (Maize ear and stalk rot fungus) protein is Fumonisin cluster-specific transcription factor FUM21 (FUM21).